A 475-amino-acid chain; its full sequence is Vasculin-like protein 1 (475 aa).

Phosphoserine occurs at positions 49 and 76. 2 disordered regions span residues 92-115 (NLSG…GSTG) and 160-191 (PSLN…SAKQ). Position 202 is a phosphoserine (serine 202). 2 disordered regions span residues 237 to 271 (LVPK…EAAL) and 292 to 318 (PKES…RRTT). Over residues 294 to 311 (ESPSSTTPPIEISSSRLT) the composition is skewed to low complexity. Position 300 is a phosphothreonine (threonine 300). Residue serine 383 is modified to Phosphoserine. The interval 456–475 (CEDSDTETSSSETSDDDAWK) is disordered.

Belongs to the vasculin family.

The protein localises to the nucleus. Possible transcription factor. The protein is Vasculin-like protein 1 (Gpbp1l1) of Rattus norvegicus (Rat).